We begin with the raw amino-acid sequence, 105 residues long: Large ribosomal subunit protein bL21 (105 aa).

Belongs to the bacterial ribosomal protein bL21 family. Part of the 50S ribosomal subunit. Contacts protein L20.

In terms of biological role, this protein binds to 23S rRNA in the presence of protein L20. The sequence is that of Large ribosomal subunit protein bL21 from Blochmanniella pennsylvanica (strain BPEN).